Reading from the N-terminus, the 762-residue chain is ATP-dependent RNA helicase SUV3 homolog, mitochondrial (762 aa).

The transit peptide at 1–36 directs the protein to the mitochondrion; it reads MQNTRRCISLICVTRQPPSLRATYGAVAAARCLHRA. The 141-residue stretch at 181–321 folds into the Helicase ATP-binding domain; it reads NARALTRKIV…ALELLQKICE (141 aa). 194–201 contacts ATP; that stretch reads GPTNSGKT. The Helicase C-terminal domain occupies 331 to 508; the sequence is RYDRLTELTV…PTADQIELYA (178 aa). Positions 716-762 are disordered; sequence EWDAQQVGQAAAASTSSKESQESPPDDSDDEDSYPGSYKKTRRKRRK. Residues 721–730 are compositionally biased toward polar residues; it reads QVGQAAAAST. Over residues 739–748 the composition is skewed to acidic residues; sequence PPDDSDDEDS.

Belongs to the helicase family. It depends on Mg(2+) as a cofactor. Mn(2+) serves as cofactor.

The protein resides in the mitochondrion. The catalysed reaction is ATP + H2O = ADP + phosphate + H(+). Major helicase player in mitochondrial RNA metabolism and maintenance. Likely component of the mitochondrial degradosome (mtEXO) complex, that degrades 3' overhang double-stranded RNA with a 3'-to-5' directionality in an ATP-dependent manner. ATPase and ATP-dependent multisubstrate helicase, able to unwind double-stranded (ds) DNA and RNA, and RNA/DNA heteroduplexes in the 5'-to-3' direction. Regulates mRNA stability and is required for the correct processing and maturation of mitochondrial transcripts. The chain is ATP-dependent RNA helicase SUV3 homolog, mitochondrial from Drosophila pseudoobscura pseudoobscura (Fruit fly).